We begin with the raw amino-acid sequence, 592 residues long: MPDTITNKLQNSTVQDVIATKLARAVFAGFEAMFATFLNITLGAQSRFEQRQYHEVQSAMRERLQVYERQVKSVSEAVKVIAYAELSCPQTWQLAKNIYGNMVKNHENEPIAHTFFNSTFGAIWDDKKIRTVHLFVLKAKYRTQPRPYDSLVKRISLQHGFNSAIKTLITNQVFRVPFSNLNQDVATLQATLTQGAKQQCRQVYELINLNDGYIEYAYSHFYRNKACYLIGRCIAKNGDNMPFAIAILNTPKGLKIDAVMMGADQLSLLFGFARTYFMVDTDQPARYVDYLSVLMPHKQRFELFNAIGFIKHAKTEFYRYKVDTTKNSPASFKYVAAPGTPGMVMLVFTIAGSDHVYKVIKDKFSAPKTATKAQVKEKYNFVKQADRVGRLVDTHEFRYLAFDLSRFSEQLLQQMKEHIGSSLIISGKALILKHVYVERKMTPLNLYINDCDSKALAQVMLDYGRAIKDLAGANIFPGDMLMKNFGVTRWGRVVFYDYDEICPLTDCNFREVPQTQNALEELSSDSYFDIEPNDIFPSQFKVFFSANELAFNAFNSHHSDLFNAQFWQTCQQQVQQGYLPDVYPYKQSWRFK.

ATP is bound by residues 337–343 (APGTPGM) and Lys-358. Asp-393 is a catalytic residue.

The protein belongs to the AceK family.

The protein localises to the cytoplasm. The enzyme catalyses L-seryl-[isocitrate dehydrogenase] + ATP = O-phospho-L-seryl-[isocitrate dehydrogenase] + ADP + H(+). Bifunctional enzyme which can phosphorylate or dephosphorylate isocitrate dehydrogenase (IDH) on a specific serine residue. This is a regulatory mechanism which enables bacteria to bypass the Krebs cycle via the glyoxylate shunt in response to the source of carbon. When bacteria are grown on glucose, IDH is fully active and unphosphorylated, but when grown on acetate or ethanol, the activity of IDH declines drastically concomitant with its phosphorylation. The protein is Isocitrate dehydrogenase kinase/phosphatase 1 of Pseudoalteromonas translucida (strain TAC 125).